We begin with the raw amino-acid sequence, 92 residues long: Small ribosomal subunit protein uS19c (92 aa).

The protein belongs to the universal ribosomal protein uS19 family.

Its subcellular location is the plastid. The protein localises to the chloroplast. Protein S19 forms a complex with S13 that binds strongly to the 16S ribosomal RNA. This chain is Small ribosomal subunit protein uS19c (rps19), found in Guillardia theta (Cryptophyte).